Reading from the N-terminus, the 1158-residue chain is cGMP-specific 3',5'-cyclic phosphodiesterase (1158 aa).

Disordered regions lie at residues 1 to 137 (MTDV…SQHD) and 195 to 216 (SPTV…SIPE). Low complexity predominate over residues 30–71 (ATTSAAASASSSQAKPLTNGAKKAATAAAAAGAEEGGASASN). Residues 108 to 135 (GSTSKSSSIHTQTSQQERAGRPTSSASQ) are compositionally biased toward polar residues. Residues 202–215 (SPRSLSNSSASSIP) show a composition bias toward low complexity. GAF domains lie at 242–394 (DIDV…GIGI) and 426–640 (NLEC…GLGI). The PDEase domain occupies 670–993 (SQDQTEKLTQ…RNWQDLAEKV (324 aa)). His746 acts as the Proton donor in catalysis. A divalent metal cation-binding residues include His750, His786, Asp787, and Asp897. Disordered stretches follow at residues 1034–1065 (QSQQ…TGAL) and 1097–1158 (VSED…CALL). Residues 1041 to 1052 (GSEDSHTPEHQR) are compositionally biased toward basic and acidic residues. A compositionally biased stretch (low complexity) spans 1114-1130 (AAGSMGRMSASSSTSSA). Basic residues predominate over residues 1148 to 1158 (SKKRSKLCALL). Cys1155 bears the Cysteine methyl ester mark. Cys1155 carries S-farnesyl cysteine lipidation. Residues 1156–1158 (ALL) constitute a propeptide, removed in mature form.

The protein belongs to the cyclic nucleotide phosphodiesterase family. As to quaternary structure, interacts with PrBP. A divalent metal cation serves as cofactor.

The protein localises to the cell membrane. The enzyme catalyses 3',5'-cyclic GMP + H2O = GMP + H(+). In terms of biological role, has a role regulating cGMP transport in Malpighian tubule principal cells. The polypeptide is cGMP-specific 3',5'-cyclic phosphodiesterase (Drosophila ananassae (Fruit fly)).